The sequence spans 227 residues: MARGIFITATGTDIGKTYVTALIIKRLRETNINCGYYKAALSGAERRDGKLIAGDANYVYNIANIKGDPNDAVSYIFQQAVSPHLAAKLNNVEISMERIKKDFYSIKNKYDYITVEGSGGIVCPISTGKKKIMLDNIIKIFKLPAIVVADAGLGTINSTILTLQYMKEKNISVKMILLNNYNHEDIIHIENKGYLSDNLLIPVYTCNKNANNLEIPVEKLIEIYEEI.

13–18 lines the ATP pocket; it reads DIGKTY. Threonine 17 serves as a coordination point for Mg(2+). The active site involves lysine 38. Position 42 (serine 42) interacts with substrate. ATP contacts are provided by residues aspartate 55, 116–119, and 179–180; these read EGSG and NN. Residues aspartate 55 and glutamate 116 each contribute to the Mg(2+) site.

Belongs to the dethiobiotin synthetase family. As to quaternary structure, homodimer. Requires Mg(2+) as cofactor.

The protein localises to the cytoplasm. The catalysed reaction is (7R,8S)-7,8-diammoniononanoate + CO2 + ATP = (4R,5S)-dethiobiotin + ADP + phosphate + 3 H(+). Its pathway is cofactor biosynthesis; biotin biosynthesis; biotin from 7,8-diaminononanoate: step 1/2. In terms of biological role, catalyzes a mechanistically unusual reaction, the ATP-dependent insertion of CO2 between the N7 and N8 nitrogen atoms of 7,8-diaminopelargonic acid (DAPA, also called 7,8-diammoniononanoate) to form a ureido ring. This chain is ATP-dependent dethiobiotin synthetase BioD, found in Clostridium botulinum (strain Okra / Type B1).